A 417-amino-acid chain; its full sequence is Aromatic-amino-acid aminotransferase 1 (417 aa).

At K258 the chain carries N6-(pyridoxal phosphate)lysine.

It belongs to the class-I pyridoxal-phosphate-dependent aminotransferase family. In terms of assembly, homodimer. Requires pyridoxal 5'-phosphate as cofactor.

It carries out the reaction an aromatic L-alpha-amino acid + 2-oxoglutarate = an aromatic oxo-acid + L-glutamate. Functionally, catalyzes the transamination of phenylalanine, tyrosine and tryptophan. Shows virtually no activity towards aspartic acid, alanine, valine or isoleucine. The chain is Aromatic-amino-acid aminotransferase 1 from Thermococcus litoralis (strain ATCC 51850 / DSM 5473 / JCM 8560 / NS-C).